Consider the following 305-residue polypeptide: Homeobox protein ceh-23 (305 aa).

2 disordered regions span residues 113–140 (ASCP…ERRR) and 262–305 (RRSK…KVLN). Polar residues predominate over residues 120–135 (ASSQATVTLQVPSTGS). The segment at residues 211-270 (HRKARTIYGTTQTQQLEDMFKGQMYVVGAERENLAQRLGLSPSQVRIWFQNRRSKHRRKQ) is a DNA-binding region (homeobox). The segment covering 287-305 (GKDEEEDDEEDEDDVKVLN) has biased composition (acidic residues).

The protein belongs to the distal-less homeobox family.

The protein resides in the nucleus. Its function is as follows. Probable transcription factor. Required for differentiation of AIY interneurons, acting downstream of LIM/homeobox protein ttx-3. Modulates gene expression, acting downstream of AMP kinase aak-2/AMPK signaling. Modulates lifespan. The chain is Homeobox protein ceh-23 (ceh-23) from Caenorhabditis elegans.